Reading from the N-terminus, the 222-residue chain is Interleukin-12 subunit alpha (222 aa).

An N-terminal signal peptide occupies residues 1–25; that stretch reads MCPLRNLLLVATLVLLNHLDHLSLG. Intrachain disulfides connect C40-C113, C67-C199, and C88-C126. Residues N42 and N96 are each glycosylated (N-linked (GlcNAc...) asparagine).

It belongs to the IL-6 superfamily. Heterodimer with IL12B; disulfide-linked. This heterodimer is known as interleukin IL-12. Heterodimer with EBI3/IL27B; not disulfide-linked. This heterodimer is known as interleukin IL-35. Interacts with NBR1; this interaction promotes IL-12 secretion.

The protein localises to the secreted. In terms of biological role, heterodimerizes with IL12B to form the IL-12 cytokine or with EBI3/IL27B to form the IL-35 cytokine. IL-12 is primarily produced by professional antigen-presenting cells (APCs) such as B-cells and dendritic cells (DCs) as well as macrophages and granulocytes and regulates T-cell and natural killer-cell responses, induces the production of interferon-gamma (IFN-gamma), favors the differentiation of T-helper 1 (Th1) cells and is an important link between innate resistance and adaptive immunity. Mechanistically, exerts its biological effects through a receptor composed of IL12R1 and IL12R2 subunits. Binding to the receptor results in the rapid tyrosine phosphorylation of a number of cellular substrates including the JAK family kinases TYK2 and JAK2. In turn, recruited STAT4 gets phosphorylated and translocates to the nucleus where it regulates cytokine/growth factor responsive genes. As part of IL-35, plays essential roles in maintaining the immune homeostasis of the liver microenvironment and also functions as an immune-suppressive cytokine. Mediates biological events through unconventional receptors composed of IL12RB2 and gp130/IL6ST heterodimers or homodimers. Signaling requires the transcription factors STAT1 and STAT4, which form a unique heterodimer that binds to distinct DNA sites. This is Interleukin-12 subunit alpha (IL12A) from Sus scrofa (Pig).